A 458-amino-acid polypeptide reads, in one-letter code: Adenylosuccinate synthetase (458 aa).

GTP contacts are provided by residues Gly17–Lys23 and Gly45–Thr47. The Proton acceptor role is filled by Asp18. Positions 18 and 45 each coordinate Mg(2+). Residues Asp18–Lys21, Asn43–His46, Thr137, Arg151, Gln247, Thr262, and Arg330 each bind IMP. The active-site Proton donor is His46. A substrate-binding site is contributed by Val326–Arg332. GTP contacts are provided by residues Arg332, Lys358 to Asp360, and Ser440 to Ser442.

This sequence belongs to the adenylosuccinate synthetase family. In terms of assembly, homodimer. Mg(2+) serves as cofactor.

The protein resides in the cytoplasm. The enzyme catalyses IMP + L-aspartate + GTP = N(6)-(1,2-dicarboxyethyl)-AMP + GDP + phosphate + 2 H(+). The protein operates within purine metabolism; AMP biosynthesis via de novo pathway; AMP from IMP: step 1/2. In terms of biological role, plays an important role in the de novo pathway of purine nucleotide biosynthesis. Catalyzes the first committed step in the biosynthesis of AMP from IMP. The protein is Adenylosuccinate synthetase of Acidovorax sp. (strain JS42).